The following is a 177-amino-acid chain: ATP synthase subunit delta (177 aa).

It belongs to the ATPase delta chain family. F-type ATPases have 2 components, F(1) - the catalytic core - and F(0) - the membrane proton channel. F(1) has five subunits: alpha(3), beta(3), gamma(1), delta(1), epsilon(1). F(0) has three main subunits: a(1), b(2) and c(10-14). The alpha and beta chains form an alternating ring which encloses part of the gamma chain. F(1) is attached to F(0) by a central stalk formed by the gamma and epsilon chains, while a peripheral stalk is formed by the delta and b chains.

The protein resides in the cell membrane. Its function is as follows. F(1)F(0) ATP synthase produces ATP from ADP in the presence of a proton or sodium gradient. F-type ATPases consist of two structural domains, F(1) containing the extramembraneous catalytic core and F(0) containing the membrane proton channel, linked together by a central stalk and a peripheral stalk. During catalysis, ATP synthesis in the catalytic domain of F(1) is coupled via a rotary mechanism of the central stalk subunits to proton translocation. This protein is part of the stalk that links CF(0) to CF(1). It either transmits conformational changes from CF(0) to CF(1) or is implicated in proton conduction. The polypeptide is ATP synthase subunit delta (Buchnera aphidicola subsp. Acyrthosiphon pisum (strain APS) (Acyrthosiphon pisum symbiotic bacterium)).